Consider the following 110-residue polypeptide: Protein RnfH (110 aa).

Residues arginine 86 to arginine 110 form a disordered region. A compositionally biased stretch (basic and acidic residues) spans glutamate 100 to arginine 110.

The protein belongs to the UPF0125 (RnfH) family.

The protein is Protein RnfH of Paraburkholderia xenovorans (strain LB400).